A 225-amino-acid polypeptide reads, in one-letter code: PKHD-type hydroxylase YbiX (225 aa).

The Fe2OG dioxygenase domain occupies 78–177; it reads TLSTPLFNRY…RVASFMWIQS (100 aa). Fe cation is bound by residues His96, Asp98, and His158. 2-oxoglutarate is bound at residue Arg168.

Requires Fe(2+) as cofactor. It depends on L-ascorbate as a cofactor.

The sequence is that of PKHD-type hydroxylase YbiX from Shigella boydii serotype 18 (strain CDC 3083-94 / BS512).